Consider the following 680-residue polypeptide: Probable galacturonosyltransferase 3 (680 aa).

Topologically, residues 1–6 (MTTFST) are cytoplasmic. Residues 7–27 (CAAFLSLVVVLHAVHVGGAIL) form a helical; Signal-anchor for type II membrane protein membrane-spanning segment. At 28–680 (ESQAPHRELK…PYLRRCDINE (653 aa)) the chain is on the lumenal side. A disordered region spans residues 118-146 (SFQNDTGMEDNASHSTTNQTDESENQFPN). N121, N128, N135, N239, N386, N438, N545, N578, N610, and N631 each carry an N-linked (GlcNAc...) asparagine glycan. Positions 130–145 (SHSTTNQTDESENQFP) are enriched in polar residues.

This sequence belongs to the glycosyltransferase 8 family. As to expression, expressed in roots, inflorescences, siliques, leaves and stems.

It is found in the golgi apparatus membrane. It functions in the pathway glycan metabolism; pectin biosynthesis. Functionally, may be involved in pectin and/or xylans biosynthesis in cell walls. The sequence is that of Probable galacturonosyltransferase 3 (GAUT3) from Arabidopsis thaliana (Mouse-ear cress).